Here is a 781-residue protein sequence, read N- to C-terminus: N-acetylneuraminate (7)9-O-acetyltransferase (781 aa).

The Cytoplasmic portion of the chain corresponds to 1-15 (MAVLAYNLGKREINQ). The helical transmembrane segment at 16 to 36 (YFSIKNAKLLAAAAVVLLTVF) threads the bilayer. The Lumenal segment spans residues 37–308 (HAASRHYGSS…SAPPLSVLQK (272 aa)). Ser-94 functions as the Acyl-ester intermediate in the catalytic mechanism. Residues Asn-139, Asn-185, and Asn-239 are each glycosylated (N-linked (GlcNAc...) asparagine). Catalysis depends on residues Asp-264 and His-267. A helical transmembrane segment spans residues 309–329 (LAAAVLLVSVVCFVLLGFSSH). The interval 330-350 (RKSRPAPDVESGEEKKHPAAV) is disordered. At 330–354 (RKSRPAPDVESGEEKKHPAAVGQLN) the chain is on the cytoplasmic side. Residues 355 to 375 (PKGPLLAIGKMSLIMLYFYLC) form a helical membrane-spanning segment. The Lumenal portion of the chain corresponds to 376–386 (DRADIFMKEQK). A helical membrane pass occupies residues 387 to 407 (FYTHSAFFIPLIYIFVLGVFY). Over 408 to 430 (SENSKETKLLNREQTDEWKGWMQ) the chain is Cytoplasmic. Residues 431 to 451 (LVILIYHISGASAFIPVYMHV) form a helical membrane-spanning segment. Arg-452 is a topological domain (lumenal). The helical transmembrane segment at 453 to 473 (VLVAAYLFQTGYGHFSFFWLK) threads the bilayer. The Cytoplasmic portion of the chain corresponds to 474–477 (GDFG). A helical membrane pass occupies residues 478-498 (LYRVCQVLFRLNFLVVVLCLV). Residues 499–504 (MDRPYQ) are Lumenal-facing. Residues 505–525 (FYYFVPLVTFWFAVIYATMAL) traverse the membrane as a helical segment. The Cytoplasmic segment spans residues 526-537 (WPQILQKQANGS). The chain crosses the membrane as a helical span at residues 538 to 558 (AFWNLALLLKLLGLLLFIGFF). At 559 to 595 (AYSQELFEGIFSVWPLSKLFELQGSIHEWWFRWKLDR) the chain is on the lumenal side. A helical transmembrane segment spans residues 596–616 (FAVVNGMLFAFIYLLLQKYQL). Residues 617–629 (LSEGKGEPLFSNK) lie on the Cytoplasmic side of the membrane. The chain crosses the membrane as a helical span at residues 630–650 (ISNCLLFVSVVSFMTYSIWAS). Residues 651–660 (GCKNKSECNE) lie on the Lumenal side of the membrane. Residue Asn-654 is glycosylated (N-linked (GlcNAc...) asparagine). Residues 661 to 681 (MHPYISVILAFILIRNIPGYA) form a helical membrane-spanning segment. Over 682–687 (RSLYSS) the chain is Cytoplasmic. The helical transmembrane segment at 688–708 (FFAWFGKISLELFICQYHIWL) threads the bilayer. Residues 709-714 (AADTKG) are Lumenal-facing. Residues 715–735 (ILVLIPGNPTLNIIVSTFIFV) traverse the membrane as a helical segment. Topologically, residues 736–756 (CVAHEISQITNDLAQVAIPKE) are cytoplasmic. The helical transmembrane segment at 757–777 (SGPLLKRLLGAGVFLVLVLTL) threads the bilayer. Topologically, residues 778 to 781 (SQKD) are lumenal.

Belongs to the PC-esterase family. CASD1 subfamily.

The protein localises to the golgi apparatus membrane. It carries out the reaction CMP-N-acetyl-beta-neuraminate + acetyl-CoA = CMP-N-acetyl-9-O-acetyl-beta-neuraminate + CoA. The enzyme catalyses a ganglioside GD3 (d18:1(4E)) + acetyl-CoA = a ganglioside Ac-O-7-GD3(d18:1(4E)) + CoA. It catalyses the reaction CMP-N-acetyl-beta-neuraminate + acetyl-CoA = CMP-N-acetyl-7-O-acetyl-beta-neuraminate + CoA. Key enzyme in the biosynthesis of O-acetylated (O-Ac) sialoglycans such as gangliosides O-AcGD3 and O-AcGD2, which affect various processes such as cell-cell interactions, host-pathogen recognition. Catalyzes the transfer of an acetyl group from a donor, the acetyl-coenzyme-A molecule (acetyl-CoA), to the C7/8/9 OH-position of a sialic acid residue. The primary site of O-acetyl group transfer on sialic acid seems to depend on cell type and can be C7, from which the O-acetyl group could subsequently migrate to the C8 and then to the C9 position, or at C9 with possibility of migrating to the C8 and then to the C7 position. Together with ST8SIA1 (GD3 synthase) it increases the levels of ganglioside Ac-O-7-GD3. Can transfer the acetyl group from acetyl-CoA to free sialate (N-acetylneuraminate, Neu5Ac) in vitro, but has preferred substrate specificity for CMP-activated sialate (CMP-Neu5Ac), resulting in the formation of 9-O-acetylated CMP-Neu5Ac (CMP-Neu5,9Ac2). CMP-Neu5,9Ac2 may be used by sialyltransferases as a sialate donor for glycoconjugate acceptors such as ganglioside GD3. O-acetylation at position C9 of ganglioside GD3 can counteract the pro-apoptotic effects of the ganglioside GD3 in tumor cells. In Danio rerio (Zebrafish), this protein is N-acetylneuraminate (7)9-O-acetyltransferase.